The following is a 396-amino-acid chain: MEFLKTCVLRRNACTAVCFWRSKVVQKPSVRRISTTSPRSTVMPAWVIDKYGKNEVLRFTQNMMMPIIHYPNEVIVKVHAASVNPIDVNMRSGYGATALNMKRDPLHVKIKGEEFPLTLGRDVSGVVMECGLDVKYFKPGDEVWAAVPPWKQGTLSEFVVVSGNEVSHKPKSLTHTQAASLPYVALTAWSAINKVGGLNDKNCTGKRVLILGASGGVGTFAIQVMKAWDAHVTAVCSQDASELVRKLGADDVIDYKSGSVEEQLKSLKPFDFILDNVGGSTETWAPDFLKKWSGATYVTLVTPFLLNMDRLGIADGMLQTGVTVGSKALKHFWKGVHYRWAFFMASGPCLDDIAELVDAGKIRPVIEQTFPFSKVPEAFLKVERGHARGKTVINVV.

The transit peptide at 1–40 directs the protein to the mitochondrion; that stretch reads MEFLKTCVLRRNACTAVCFWRSKVVQKPSVRRISTTSPRS. Residues 52-393 enclose the Enoyl reductase (ER) domain; it reads GKNEVLRFTQ…RGHARGKTVI (342 aa). NADPH-binding residues include Ser-214, Gly-216, Val-217, Ser-237, Tyr-255, Asn-276, Leu-300, Ala-341, Phe-343, His-386, Ala-387, and Arg-388.

This sequence belongs to the zinc-containing alcohol dehydrogenase family. Quinone oxidoreductase subfamily. In terms of assembly, interacts with RTN4, UQCRC1 and UQCRC2. Widely expressed in mitochondria-enriched tissues. Found in heart, muscle, kidney, liver, brain and placenta.

The protein resides in the mitochondrion matrix. It is found in the mitochondrion outer membrane. The catalysed reaction is a 3-demethylubiquinone + NADH + 2 H(+) = a 3-demethylubiquinol + NAD(+). It catalyses the reaction a 3-demethylubiquinone + NADPH + 2 H(+) = a 3-demethylubiquinol + NADP(+). It carries out the reaction 3-demethylubiquinone-10 + NADH + 2 H(+) = 3-demethylubiquinol-10 + NAD(+). The enzyme catalyses 3-demethylubiquinone-10 + NADPH + 2 H(+) = 3-demethylubiquinol-10 + NADP(+). Its pathway is cofactor biosynthesis; ubiquinone biosynthesis. Its function is as follows. NAD(P)H oxidoreductase involved in the ubiquinone biosynthetic pathway. Required for the O-methyltransferase activity of COQ3. Able to catalyze the oxidoreduction of 3-demethylubiquinone into 3-demethylubiquinol in vitro. However, it is unclear if 3-demethylubiquinone constitutes a substrate in vivo. May also play a role in the regulation of retinal ganglion cell (RGC) neurite outgrowth, and hence in the development of the inner retina and optic nerve. Appears to be a potent inhibitor of regeneration following spinal cord injury. The sequence is that of NAD(P)H oxidoreductase RTN4IP1, mitochondrial from Homo sapiens (Human).